Here is a 237-residue protein sequence, read N- to C-terminus: Ribonuclease PH (237 aa).

Phosphate is bound by residues R86 and 124 to 126 (GTR).

It belongs to the RNase PH family. As to quaternary structure, homohexameric ring arranged as a trimer of dimers.

It carries out the reaction tRNA(n+1) + phosphate = tRNA(n) + a ribonucleoside 5'-diphosphate. In terms of biological role, phosphorolytic 3'-5' exoribonuclease that plays an important role in tRNA 3'-end maturation. Removes nucleotide residues following the 3'-CCA terminus of tRNAs; can also add nucleotides to the ends of RNA molecules by using nucleoside diphosphates as substrates, but this may not be physiologically important. Probably plays a role in initiation of 16S rRNA degradation (leading to ribosome degradation) during starvation. This Pseudoalteromonas translucida (strain TAC 125) protein is Ribonuclease PH.